Reading from the N-terminus, the 110-residue chain is GIFPYNVPEGQHDPAYLQALQQQALHYINLQQVPDLQLHRARELEVIAKNPTAYHPGYNYAGHYYPGNYYSGYYHPGHYYTALHHNAALHQHSLNEQKVINEQKALIAGQ.

This chain is Cuticle protein 13, found in Limulus polyphemus (Atlantic horseshoe crab).